A 506-amino-acid polypeptide reads, in one-letter code: ATP synthase subunit alpha (506 aa).

169–176 provides a ligand contact to ATP; it reads GDRGTGKT.

The protein belongs to the ATPase alpha/beta chains family. In terms of assembly, F-type ATPases have 2 components, CF(1) - the catalytic core - and CF(0) - the membrane proton channel. CF(1) has five subunits: alpha(3), beta(3), gamma(1), delta(1), epsilon(1). CF(0) has three main subunits: a(1), b(2) and c(9-12). The alpha and beta chains form an alternating ring which encloses part of the gamma chain. CF(1) is attached to CF(0) by a central stalk formed by the gamma and epsilon chains, while a peripheral stalk is formed by the delta and b chains.

The protein resides in the cell membrane. The enzyme catalyses ATP + H2O + 4 H(+)(in) = ADP + phosphate + 5 H(+)(out). In terms of biological role, produces ATP from ADP in the presence of a proton gradient across the membrane. The alpha chain is a regulatory subunit. This Symbiobacterium thermophilum (strain DSM 24528 / JCM 14929 / IAM 14863 / T) protein is ATP synthase subunit alpha.